The following is a 42-amino-acid chain: Photosystem II reaction center protein J (42 aa).

Residues 10–30 (IPLWFIGVIAGIAALSIVGLF) form a helical membrane-spanning segment.

Belongs to the PsbJ family. In terms of assembly, PSII is composed of 1 copy each of membrane proteins PsbA, PsbB, PsbC, PsbD, PsbE, PsbF, PsbH, PsbI, PsbJ, PsbK, PsbL, PsbM, PsbT, PsbX, PsbY, PsbZ, Psb30/Ycf12, at least 3 peripheral proteins of the oxygen-evolving complex and a large number of cofactors. It forms dimeric complexes.

The protein resides in the plastid. It localises to the chloroplast thylakoid membrane. Its function is as follows. One of the components of the core complex of photosystem II (PSII). PSII is a light-driven water:plastoquinone oxidoreductase that uses light energy to abstract electrons from H(2)O, generating O(2) and a proton gradient subsequently used for ATP formation. It consists of a core antenna complex that captures photons, and an electron transfer chain that converts photonic excitation into a charge separation. The chain is Photosystem II reaction center protein J from Zygnema circumcarinatum (Green alga).